The chain runs to 1262 residues: Clustered mitochondria protein homolog (1262 aa).

Residues 1-47 form a disordered region; that stretch reads MTSGSELKAEVDAPVVNGKDELVHEEDNNDSGHSSINTPDASEDKQT. Over residues 31–40 the composition is skewed to polar residues; that stretch reads SGHSSINTPD. In terms of domain architecture, Clu spans 335–580; that stretch reads AIELIEPFRV…RSMPPDVHYL (246 aa).

The protein belongs to the CLU family.

The protein resides in the cytoplasm. MRNA-binding protein involved in proper cytoplasmic distribution of mitochondria. The protein is Clustered mitochondria protein homolog of Caenorhabditis briggsae.